The primary structure comprises 150 residues: L-alanine exporter AlaE (150 aa).

The next 4 membrane-spanning stretches (helical) occupy residues 17-37, 48-68, 86-106, and 111-131; these read FAMV…ISGM, LSIP…DFML, LVAY…VVGA, and IITA…FYGY.

Belongs to the AlaE exporter family.

Its subcellular location is the cell inner membrane. Its function is as follows. Exports L-alanine. This is L-alanine exporter AlaE from Aliivibrio fischeri (strain ATCC 700601 / ES114) (Vibrio fischeri).